The primary structure comprises 371 residues: MSSSNSNNGGPPLAPRLARFVRQDVQNMHAYAIQPSDGFVKLDAMENPHRLPAALQAELGRRLGALAINRYPGTRTDELRAALARHAGLPPGCALMLGNGSDELISLLSMACDVPGATVLAPLPGFVMYEMSARLQGLRFVGVPLTADFELDAAAMLAAVREHRPALTYLAYPNNPTANLWDDAVIERVVDAVREHGGLVVIDEAYQPFASRSYIDRLAHHDHVLLMRTLSKFGLAGVRLGYLMGPTALVAEIDKVRPPYNVSVLNCEAALFALEHEDEFARQAAVLRAERARLLDALRAMSGATPFPSEANMVLVRVPDAKAAFEGLKARGVLVKNVSGLHPLLANCLRLTVGLPEENDQMIAALKGILS.

Position 232 is an N6-(pyridoxal phosphate)lysine (lysine 232).

It belongs to the class-II pyridoxal-phosphate-dependent aminotransferase family. Histidinol-phosphate aminotransferase subfamily. In terms of assembly, homodimer. It depends on pyridoxal 5'-phosphate as a cofactor.

The enzyme catalyses L-histidinol phosphate + 2-oxoglutarate = 3-(imidazol-4-yl)-2-oxopropyl phosphate + L-glutamate. Its pathway is amino-acid biosynthesis; L-histidine biosynthesis; L-histidine from 5-phospho-alpha-D-ribose 1-diphosphate: step 7/9. This is Histidinol-phosphate aminotransferase from Methylibium petroleiphilum (strain ATCC BAA-1232 / LMG 22953 / PM1).